Reading from the N-terminus, the 561-residue chain is Putative pectinesterase/pectinesterase inhibitor 24 (561 aa).

A helical transmembrane segment spans residues 26–46 (IAIIAVSLVILAGIVIGAVFG). Residues 64–211 (DSISVSVKAV…TELTSNALAI (148 aa)) are pectinesterase inhibitor 24. N-linked (GlcNAc...) asparagine glycosylation is found at Asn-92, Asn-130, Asn-148, and Asn-200. A pectinesterase 24 region spans residues 255–548 (DIVVAKDGSG…TVKPFIDGGR (294 aa)). Thr-330 and Gln-360 together coordinate substrate. Asp-383 serves as the catalytic Proton donor; for pectinesterase activity. An intrachain disulfide couples Cys-397 to Cys-417. The active-site Nucleophile; for pectinesterase activity is Asp-404. Substrate is bound by residues Arg-468 and Trp-470. Asn-472 carries N-linked (GlcNAc...) asparagine glycosylation.

In the N-terminal section; belongs to the PMEI family. It in the C-terminal section; belongs to the pectinesterase family.

The protein resides in the membrane. It carries out the reaction [(1-&gt;4)-alpha-D-galacturonosyl methyl ester](n) + n H2O = [(1-&gt;4)-alpha-D-galacturonosyl](n) + n methanol + n H(+). The protein operates within glycan metabolism; pectin degradation; 2-dehydro-3-deoxy-D-gluconate from pectin: step 1/5. Acts in the modification of cell walls via demethylesterification of cell wall pectin. This chain is Putative pectinesterase/pectinesterase inhibitor 24 (PME24), found in Arabidopsis thaliana (Mouse-ear cress).